A 118-amino-acid chain; its full sequence is CLAVATA3/ESR (CLE)-related protein 12 (118 aa).

The signal sequence occupies residues 1-35 (MLRISSSSSMALKFSQILFIVLWLSLFFLLLHHLY). Basic and acidic residues-rich tracts occupy residues 75 to 91 (TPFHSRDNSRHNHRSGE) and 98 to 108 (IDPRYGVEKRR). The disordered stretch occupies residues 75–118 (TPFHSRDNSRHNHRSGEQYDGDEIDPRYGVEKRRVPSGPNPLHH). Residues proline 110 and proline 113 each carry the hydroxyproline modification. Proline 113 is a glycosylation site (O-linked (Ara...) hydroxyproline).

The protein belongs to the CLV3/ESR signal peptide family. The O-glycosylation (arabinosylation) of the hydroxyproline Pro-113 enhances binding affinity of the CLE12p peptide for its receptor. As to expression, mostly expressed in seedlings, roots, flowers, stems and apex, and, to a lower extent, in leaves and siliques.

Its subcellular location is the secreted. It is found in the extracellular space. Extracellular signal peptide that regulates cell fate. Represses root apical meristem maintenance. The protein is CLAVATA3/ESR (CLE)-related protein 12 of Arabidopsis thaliana (Mouse-ear cress).